A 186-amino-acid chain; its full sequence is UPF0397 protein LBUL_1584 (186 aa).

Helical transmembrane passes span 13–33 (IAALGIGSAVFVIVGRFASIP), 46–66 (AFLAMIAMIYGPTVGFGVGFI), 79–99 (TWWNWNFAAGFLGFFIGLYAL), 114–134 (VIFNVVQVVANAIVWFLLGSV), and 150–170 (QAGLTTLMDGLTIAVLGTILL).

This sequence belongs to the UPF0397 family.

The protein resides in the cell membrane. The polypeptide is UPF0397 protein LBUL_1584 (Lactobacillus delbrueckii subsp. bulgaricus (strain ATCC BAA-365 / Lb-18)).